Here is a 54-residue protein sequence, read N- to C-terminus: Ovomucoid (54 aa).

In terms of domain architecture, Kazal-like spans 4–54 (VDCSDYPKPVCPLDYMPLCGSDSKTYSNKCNFCNAVVESSGTLTLRHFGKC). 3 disulfide bridges follow: C6–C36, C14–C33, and C22–C54.

This is the only ovomucoid third domain known to be not glycosylated.

The protein resides in the secreted. This chain is Ovomucoid, found in Struthio camelus (Common ostrich).